The chain runs to 561 residues: uncharacterized protein (561 aa).

The next 6 helical transmembrane spans lie at 27 to 49 (ILEF…GLLI), 54 to 71 (FFGI…ALAL), 83 to 105 (LVYQ…SEFF), 115 to 137 (LTLF…IKLF), 142 to 162 (IIGA…AAMV), and 177 to 199 (VVGY…AIGA). The RCK C-terminal domain occupies 292 to 373 (QQDVPIEDTD…MSEVRRFLGD (82 aa)). The next 4 helical transmembrane spans lie at 383–405 (LMPF…PLPG), 409–428 (LSLG…GALN), 441–463 (ASRT…SAGV), and 478–500 (IAGG…MPLF).

The protein belongs to the AAE transporter (TC 2.A.81) family.

The protein resides in the cell membrane. This is an uncharacterized protein from Corynebacterium diphtheriae (strain ATCC 700971 / NCTC 13129 / Biotype gravis).